The primary structure comprises 409 residues: Glycosaminoglycan xylosylkinase (409 aa).

Residues 1–6 (MKLKQR) lie on the Cytoplasmic side of the membrane. Residues 7 to 25 (VVVLCAVLFLLGLAKVFLL) form a helical; Signal-anchor for type II membrane protein membrane-spanning segment. Residues 26–409 (DGGEGSAASR…IEDRMNLPHP (384 aa)) are Lumenal-facing. Residues Q107 and K123 each contribute to the ATP site. D142 provides a ligand contact to Mn(2+). An N-linked (GlcNAc...) asparagine glycan is attached at N193. 2 disulfides stabilise this stretch: C196–C211 and C201–C204. Position 222 to 225 (222 to 225 (TLWL)) interacts with ATP. 2 disulfide bridges follow: C257–C331 and C332–C389. D289 is a catalytic residue. ATP is bound by residues E294 and D309. D309 is a binding site for Mn(2+).

The protein belongs to the FAM20 family. The cofactor is Mn(2+).

The protein localises to the golgi apparatus membrane. The catalysed reaction is 3-O-(beta-D-galactosyl-(1-&gt;3)-beta-D-galactosyl-(1-&gt;4)-beta-D-xylosyl)-L-seryl-[protein] + ATP = 3-O-(beta-D-galactosyl-(1-&gt;3)-beta-D-galactosyl-(1-&gt;4)-beta-D-2-O-phosphoxylosyl)-L-seryl-[protein] + ADP + H(+). Responsible for the 2-O-phosphorylation of xylose in the glycosaminoglycan-protein linkage region of proteoglycans thereby regulating the amount of mature GAG chains. Sulfated glycosaminoglycans (GAGs), including heparan sulfate and chondroitin sulfate, are synthesized on the so-called common GAG-protein linkage region (GlcUAbeta1-3Galbeta1-3Galbeta1-4Xylbeta1-O-Ser) of core proteins, which is formed by the stepwise addition of monosaccharide residues by the respective specific glycosyltransferases. This Danio rerio (Zebrafish) protein is Glycosaminoglycan xylosylkinase.